A 230-amino-acid polypeptide reads, in one-letter code: Thymine/uracil-DNA glycosylase (230 aa).

[4Fe-4S] cluster contacts are provided by cysteine 204, cysteine 211, cysteine 214, and cysteine 221.

This sequence belongs to the Nth/MutY family. [4Fe-4S] cluster is required as a cofactor.

It carries out the reaction Hydrolyzes mismatched double-stranded DNA and polynucleotides, releasing free thymine.. Functionally, DNA glycosylase that excises thymine from T/G mismatches and uracil from U/G mismatches. Can also process T/GO and U/GO, but not A/G, T/C and U/C. Has weak AP lyase activity. The polypeptide is Thymine/uracil-DNA glycosylase (Pyrobaculum aerophilum (strain ATCC 51768 / DSM 7523 / JCM 9630 / CIP 104966 / NBRC 100827 / IM2)).